The chain runs to 340 residues: Phosphate acyltransferase (340 aa).

The interval Trp-285–Arg-340 is disordered. The span at Arg-300 to Thr-325 shows a compositional bias: basic residues.

The protein belongs to the PlsX family. In terms of assembly, homodimer. Probably interacts with PlsY.

Its subcellular location is the cytoplasm. It catalyses the reaction a fatty acyl-[ACP] + phosphate = an acyl phosphate + holo-[ACP]. Its pathway is lipid metabolism; phospholipid metabolism. In terms of biological role, catalyzes the reversible formation of acyl-phosphate (acyl-PO(4)) from acyl-[acyl-carrier-protein] (acyl-ACP). This enzyme utilizes acyl-ACP as fatty acyl donor, but not acyl-CoA. This chain is Phosphate acyltransferase, found in Laribacter hongkongensis (strain HLHK9).